The chain runs to 446 residues: Eukaryotic translation initiation factor 3 subunit E (446 aa).

In terms of domain architecture, PCI spans 240–420 (PLFNDENSRE…GTVVMNHPNS (181 aa)).

The protein belongs to the eIF-3 subunit E family. Component of the eukaryotic translation initiation factor 3 (eIF-3) complex.

The protein localises to the cytoplasm. In terms of biological role, component of the eukaryotic translation initiation factor 3 (eIF-3) complex, which is involved in protein synthesis of a specialized repertoire of mRNAs and, together with other initiation factors, stimulates binding of mRNA and methionyl-tRNAi to the 40S ribosome. The eIF-3 complex specifically targets and initiates translation of a subset of mRNAs involved in cell proliferation. In Pyricularia oryzae (strain 70-15 / ATCC MYA-4617 / FGSC 8958) (Rice blast fungus), this protein is Eukaryotic translation initiation factor 3 subunit E.